The following is a 334-amino-acid chain: Formamidase (334 aa).

A CN hydrolase domain is found at 14 to 260 (FLVAAIQFPV…WEIVTGEIYP (247 aa)). Glu60 (proton acceptor) is an active-site residue. Lys133 functions as the Proton donor in the catalytic mechanism. Cys166 acts as the Nucleophile in catalysis.

The protein belongs to the carbon-nitrogen hydrolase superfamily. Aliphatic amidase family.

It carries out the reaction formamide + H2O = formate + NH4(+). Functionally, is an aliphatic amidase with a restricted substrate specificity, as it only hydrolyzes formamide. This chain is Formamidase, found in Helicobacter pylori (strain HPAG1).